The sequence spans 200 residues: GTP cyclohydrolase-2 (200 aa).

R50–E54 is a binding site for GTP. Positions 55, 66, and 68 each coordinate Zn(2+). GTP is bound by residues Q71, E93–R95, and T115. D127 functions as the Proton acceptor in the catalytic mechanism. R129 (nucleophile) is an active-site residue. GTP-binding residues include T150 and K155.

The protein belongs to the GTP cyclohydrolase II family. The cofactor is Zn(2+).

The enzyme catalyses GTP + 4 H2O = 2,5-diamino-6-hydroxy-4-(5-phosphoribosylamino)-pyrimidine + formate + 2 phosphate + 3 H(+). It participates in cofactor biosynthesis; riboflavin biosynthesis; 5-amino-6-(D-ribitylamino)uracil from GTP: step 1/4. Catalyzes the conversion of GTP to 2,5-diamino-6-ribosylamino-4(3H)-pyrimidinone 5'-phosphate (DARP), formate and pyrophosphate. In Acinetobacter baumannii (strain AB0057), this protein is GTP cyclohydrolase-2.